Here is a 217-residue protein sequence, read N- to C-terminus: MNQSLLAPFGTAIERVEAGLNALRQGLGVLVVDDEDRENEGDLIFAAESLTNAQMAMLIRECSGIVCLCLPDEKVKALALPPMVENNSSQYGTAFTVSIEAKVGVTTGVSAADRVTTIKTAIADHAKPSDLARPGHVYPLRAQPGGVLTRRGHTEGTIDLMQLAGLKPAGVLCEVTNPDGTMARLPEIIAFGALHNMPVLTIEDIVVYRKSLLANVG.

D-ribulose 5-phosphate-binding positions include 37-38 (RE), Asp-42, 150-154 (RRGHT), and Glu-174. Glu-38 is a Mg(2+) binding site. His-153 is a binding site for Mg(2+).

This sequence belongs to the DHBP synthase family. Homodimer. It depends on Mg(2+) as a cofactor. The cofactor is Mn(2+).

The enzyme catalyses D-ribulose 5-phosphate = (2S)-2-hydroxy-3-oxobutyl phosphate + formate + H(+). The protein operates within cofactor biosynthesis; riboflavin biosynthesis; 2-hydroxy-3-oxobutyl phosphate from D-ribulose 5-phosphate: step 1/1. Catalyzes the conversion of D-ribulose 5-phosphate to formate and 3,4-dihydroxy-2-butanone 4-phosphate. The protein is 3,4-dihydroxy-2-butanone 4-phosphate synthase of Shewanella oneidensis (strain ATCC 700550 / JCM 31522 / CIP 106686 / LMG 19005 / NCIMB 14063 / MR-1).